Reading from the N-terminus, the 522-residue chain is Na(+)/H(+) antiporter NhaB (522 aa).

The next 9 helical transmembrane spans lie at 13-33, 98-118, 140-160, 239-259, 304-324, 356-376, 390-410, 446-466, and 477-497; these read FLGN…IINP, LLLV…LFVF, AFLS…SVSV, FFIR…LVCL, AIIG…LVGL, LTVF…TPII, LFYL…VGTV, ATPN…APLI, and ALPY…FLLV.

This sequence belongs to the NhaB Na(+)/H(+) (TC 2.A.34) antiporter family.

The protein resides in the cell inner membrane. The catalysed reaction is 2 Na(+)(in) + 3 H(+)(out) = 2 Na(+)(out) + 3 H(+)(in). Functionally, na(+)/H(+) antiporter that extrudes sodium in exchange for external protons. In Yersinia pestis bv. Antiqua (strain Angola), this protein is Na(+)/H(+) antiporter NhaB.